The following is a 185-amino-acid chain: Tumor necrosis factor receptor superfamily member 17 (185 aa).

Over 1–49 the chain is Extracellular; that stretch reads MAQQCFHSEYFDSLLHACKPCHLRCSNPPATCQPYCDPSVTSSVKGTYT. One copy of the TNFR-Cys repeat lies at 4–36; it reads QCFHSEYFDSLLHACKPCHLRCSNPPATCQPYC. 3 disulfides stabilise this stretch: C5–C18, C21–C32, and C25–C36. Residues 50–70 traverse the membrane as a helical; Signal-anchor for type III membrane protein segment; it reads VLWIFLGLTLVLSLALFTISF. Residues 71-185 are Cytoplasmic-facing; that stretch reads LLRKMNPEAL…MGMEKPTHTR (115 aa).

As to quaternary structure, associates with TRAF1, TRAF2, TRAF3, TRAF5 and TRAF6. As to expression, detected in spleen, thymus, bone marrow and heart, and at lower levels in kidney and lung.

It is found in the membrane. Receptor for TNFSF13B/BLyS/BAFF and TNFSF13/APRIL. Promotes B-cell survival and plays a role in the regulation of humoral immunity. Activates NF-kappa-B and JNK. The sequence is that of Tumor necrosis factor receptor superfamily member 17 (Tnfrsf17) from Mus musculus (Mouse).